A 418-amino-acid chain; its full sequence is NADH-quinone oxidoreductase subunit D (418 aa).

The protein belongs to the complex I 49 kDa subunit family. In terms of assembly, NDH-1 is composed of 14 different subunits. Subunits NuoB, C, D, E, F, and G constitute the peripheral sector of the complex.

Its subcellular location is the cell inner membrane. It carries out the reaction a quinone + NADH + 5 H(+)(in) = a quinol + NAD(+) + 4 H(+)(out). Functionally, NDH-1 shuttles electrons from NADH, via FMN and iron-sulfur (Fe-S) centers, to quinones in the respiratory chain. The immediate electron acceptor for the enzyme in this species is believed to be ubiquinone. Couples the redox reaction to proton translocation (for every two electrons transferred, four hydrogen ions are translocated across the cytoplasmic membrane), and thus conserves the redox energy in a proton gradient. The sequence is that of NADH-quinone oxidoreductase subunit D from Neisseria meningitidis serogroup A / serotype 4A (strain DSM 15465 / Z2491).